Reading from the N-terminus, the 542-residue chain is CTP synthase (542 aa).

Residues 1–265 (MTRYIFVTGG…DQLVIERFGL (265 aa)) form an amidoligase domain region. S13 contributes to the CTP binding site. S13 is a binding site for UTP. Residues 14–19 (SLGKGI) and D71 each bind ATP. D71 and E139 together coordinate Mg(2+). Residues 146–148 (DIE), 186–191 (KTKPTQ), and K222 each bind CTP. Residues 186 to 191 (KTKPTQ) and K222 each bind UTP. A Glutamine amidotransferase type-1 domain is found at 290–541 (TIAMVGKYME…VEAALANKKG (252 aa)). L-glutamine is bound at residue G351. Catalysis depends on C378, which acts as the Nucleophile; for glutamine hydrolysis. L-glutamine contacts are provided by residues 379–382 (LGMQ), E402, and R469. Catalysis depends on residues H514 and E516.

The protein belongs to the CTP synthase family. In terms of assembly, homotetramer.

It carries out the reaction UTP + L-glutamine + ATP + H2O = CTP + L-glutamate + ADP + phosphate + 2 H(+). The enzyme catalyses L-glutamine + H2O = L-glutamate + NH4(+). It catalyses the reaction UTP + NH4(+) + ATP = CTP + ADP + phosphate + 2 H(+). It participates in pyrimidine metabolism; CTP biosynthesis via de novo pathway; CTP from UDP: step 2/2. With respect to regulation, allosterically activated by GTP, when glutamine is the substrate; GTP has no effect on the reaction when ammonia is the substrate. The allosteric effector GTP functions by stabilizing the protein conformation that binds the tetrahedral intermediate(s) formed during glutamine hydrolysis. Inhibited by the product CTP, via allosteric rather than competitive inhibition. Functionally, catalyzes the ATP-dependent amination of UTP to CTP with either L-glutamine or ammonia as the source of nitrogen. Regulates intracellular CTP levels through interactions with the four ribonucleotide triphosphates. The chain is CTP synthase from Marinobacter nauticus (strain ATCC 700491 / DSM 11845 / VT8) (Marinobacter aquaeolei).